A 507-amino-acid polypeptide reads, in one-letter code: 2,3-bisphosphoglycerate-independent phosphoglycerate mutase (507 aa).

Residues Asp11 and Ser61 each coordinate Mn(2+). Residue Ser61 is the Phosphoserine intermediate of the active site. Substrate contacts are provided by residues His122, 150 to 151, Arg182, Arg188, 257 to 260, and Lys332; these read RD and RPDR. Mn(2+)-binding residues include Asp397, His401, Asp438, His439, and His456.

The protein belongs to the BPG-independent phosphoglycerate mutase family. In terms of assembly, monomer. Mn(2+) is required as a cofactor.

It catalyses the reaction (2R)-2-phosphoglycerate = (2R)-3-phosphoglycerate. It functions in the pathway carbohydrate degradation; glycolysis; pyruvate from D-glyceraldehyde 3-phosphate: step 3/5. Functionally, catalyzes the interconversion of 2-phosphoglycerate and 3-phosphoglycerate. This Mycoplasma genitalium (strain ATCC 33530 / DSM 19775 / NCTC 10195 / G37) (Mycoplasmoides genitalium) protein is 2,3-bisphosphoglycerate-independent phosphoglycerate mutase.